A 132-amino-acid chain; its full sequence is MYLENYKRFEAIIDKLREFEGAIIVEGARDEASLRKLGVRAEIIKLSRLPLPEVALIASEYDEVMILTDLDRKGEELARKLAWYLEGYGCKVDTETRRELKMIAKKDIKGIEDLYSLYLRVSLRFWPPEEGI.

In terms of domain architecture, Toprim spans 20–100 (EGAIIVEGAR…KVDTETRREL (81 aa)). Positions 26, 69, and 71 each coordinate Mg(2+).

The protein belongs to the UPF0292 family. Requires Mg(2+) as cofactor.

This is UPF0292 protein PH1700 from Pyrococcus horikoshii (strain ATCC 700860 / DSM 12428 / JCM 9974 / NBRC 100139 / OT-3).